Here is a 398-residue protein sequence, read N- to C-terminus: uncharacterized protein (398 aa).

Residues 240-306 form the BIG2 domain; that stretch reads SLNKNIDQLI…SITVTTNDGS (67 aa).

This is an uncharacterized protein from Clostridium acetobutylicum (strain ATCC 824 / DSM 792 / JCM 1419 / IAM 19013 / LMG 5710 / NBRC 13948 / NRRL B-527 / VKM B-1787 / 2291 / W).